The chain runs to 590 residues: Leishmanolysin (590 aa).

The N-terminal stretch at 1-39 is a signal peptide; it reads MSVDSSSTHRHRSVAARLVRLAAAGAAVIAAVGTAAAWA. The propeptide at 40 to 87 is activation peptide; sequence HAGAVQHRCIHDAMQARVRQSVARHHTAPGAVSAVGLSYVTLGAAPTV. 2 disulfide bridges follow: Cys112/Cys129 and Cys178/Cys217. Zn(2+) is bound at residue His251. Glu252 is an active-site residue. His255 contributes to the Zn(2+) binding site. The N-linked (GlcNAc...) asparagine glycan is linked to Asn287. Disulfide bonds link Cys301-Cys373, Cys380-Cys443, Cys393-Cys412, Cys402-Cys477, Cys454-Cys498, Cys503-Cys553, and Cys523-Cys546. His321 serves as a coordination point for Zn(2+). Asn565 carries the GPI-anchor amidated asparagine lipid modification. Positions 566 to 590 are cleaved as a propeptide — removed in mature form; that stretch reads AAAGRRGPRAAATALLVAALLAVAL.

It belongs to the peptidase M8 family. It depends on Zn(2+) as a cofactor.

The protein resides in the cell membrane. The enzyme catalyses Preference for hydrophobic residues at P1 and P1' and basic residues at P2' and P3'. A model nonapeptide is cleaved at -Ala-Tyr-|-Leu-Lys-Lys-.. Has an integral role during the infection of macrophages in the mammalian host. This Leishmania donovani protein is Leishmanolysin (gp63).